The following is a 198-amino-acid chain: Recombination protein RecR (198 aa).

The segment at 57 to 72 (CSVCGHITDKDPCYIC) adopts a C4-type zinc-finger fold. The region spanning 80–175 (SVICVVQESK…KVTRIAHGLP (96 aa)) is the Toprim domain.

The protein belongs to the RecR family.

Its function is as follows. May play a role in DNA repair. It seems to be involved in an RecBC-independent recombinational process of DNA repair. It may act with RecF and RecO. The chain is Recombination protein RecR from Listeria welshimeri serovar 6b (strain ATCC 35897 / DSM 20650 / CCUG 15529 / CIP 8149 / NCTC 11857 / SLCC 5334 / V8).